The primary structure comprises 67 residues: Andropin (67 aa).

Positions 1-19 (MKYFLVLVVLTLILAISVG) are cleaved as a signal peptide.

It belongs to the andropin family. In terms of tissue distribution, ejaculatory duct of adult males.

The protein localises to the secreted. In terms of biological role, male-specific peptide with moderate activity against Gram-positive bacteria. The polypeptide is Andropin (Anp) (Drosophila orena (Fruit fly)).